The primary structure comprises 416 residues: LL-diaminopimelate aminotransferase (416 aa).

Tyr15 and Gly42 together coordinate substrate. Pyridoxal 5'-phosphate-binding positions include Tyr72, 108–109 (SK), Tyr132, Asn187, Tyr218, and 246–248 (SFS). Lys109, Tyr132, and Asn187 together coordinate substrate. Lys249 carries the N6-(pyridoxal phosphate)lysine modification. Residues Arg257 and Asn292 each contribute to the pyridoxal 5'-phosphate site. Positions 292 and 388 each coordinate substrate.

Belongs to the class-I pyridoxal-phosphate-dependent aminotransferase family. LL-diaminopimelate aminotransferase subfamily. As to quaternary structure, homodimer. Pyridoxal 5'-phosphate serves as cofactor.

It catalyses the reaction (2S,6S)-2,6-diaminopimelate + 2-oxoglutarate = (S)-2,3,4,5-tetrahydrodipicolinate + L-glutamate + H2O + H(+). It participates in amino-acid biosynthesis; L-lysine biosynthesis via DAP pathway; LL-2,6-diaminopimelate from (S)-tetrahydrodipicolinate (aminotransferase route): step 1/1. Involved in the synthesis of meso-diaminopimelate (m-DAP or DL-DAP), required for both lysine and peptidoglycan biosynthesis. Catalyzes the direct conversion of tetrahydrodipicolinate to LL-diaminopimelate. In Synechococcus sp. (strain JA-2-3B'a(2-13)) (Cyanobacteria bacterium Yellowstone B-Prime), this protein is LL-diaminopimelate aminotransferase.